Consider the following 430-residue polypeptide: Glutamate-1-semialdehyde 2,1-aminomutase (430 aa).

Lys265 carries the post-translational modification N6-(pyridoxal phosphate)lysine.

Belongs to the class-III pyridoxal-phosphate-dependent aminotransferase family. HemL subfamily. In terms of assembly, homodimer. The cofactor is pyridoxal 5'-phosphate.

It localises to the cytoplasm. The catalysed reaction is (S)-4-amino-5-oxopentanoate = 5-aminolevulinate. It participates in porphyrin-containing compound metabolism; protoporphyrin-IX biosynthesis; 5-aminolevulinate from L-glutamyl-tRNA(Glu): step 2/2. This is Glutamate-1-semialdehyde 2,1-aminomutase from Shewanella sp. (strain MR-7).